The following is a 466-amino-acid chain: 3-isopropylmalate dehydratase large subunit (466 aa).

Residues cysteine 347, cysteine 407, and cysteine 410 each coordinate [4Fe-4S] cluster.

The protein belongs to the aconitase/IPM isomerase family. LeuC type 1 subfamily. Heterodimer of LeuC and LeuD. [4Fe-4S] cluster is required as a cofactor.

It catalyses the reaction (2R,3S)-3-isopropylmalate = (2S)-2-isopropylmalate. Its pathway is amino-acid biosynthesis; L-leucine biosynthesis; L-leucine from 3-methyl-2-oxobutanoate: step 2/4. In terms of biological role, catalyzes the isomerization between 2-isopropylmalate and 3-isopropylmalate, via the formation of 2-isopropylmaleate. This Salmonella paratyphi A (strain ATCC 9150 / SARB42) protein is 3-isopropylmalate dehydratase large subunit.